The primary structure comprises 127 residues: Large-conductance mechanosensitive channel (127 aa).

Transmembrane regions (helical) follow at residues 9 to 29, 32 to 52, and 75 to 95; these read EFAM…GVAF, IVTA…LGGI, and VIDF…INLL.

This sequence belongs to the MscL family. In terms of assembly, homopentamer.

It is found in the cell inner membrane. Its function is as follows. Channel that opens in response to stretch forces in the membrane lipid bilayer. May participate in the regulation of osmotic pressure changes within the cell. The chain is Large-conductance mechanosensitive channel from Legionella pneumophila (strain Paris).